Consider the following 53-residue polypeptide: Large ribosomal subunit protein eL40 (53 aa).

This sequence belongs to the eukaryotic ribosomal protein eL40 family.

The protein is Large ribosomal subunit protein eL40 of Pyrobaculum calidifontis (strain DSM 21063 / JCM 11548 / VA1).